The following is a 296-amino-acid chain: GTPase Era (296 aa).

The Era-type G domain occupies 3–170 (KSGFVTIVGR…KELMFKYIPE (168 aa)). The tract at residues 11–18 (GRPNVGKS) is G1. 11–18 (GRPNVGKS) is a GTP binding site. Residues 37-41 (QTTRN) are G2. The G3 stretch occupies residues 58–61 (DTPG). GTP contacts are provided by residues 58–62 (DTPGI) and 120–123 (NKID). The G4 stretch occupies residues 120–123 (NKID). Residues 149-151 (ISA) are G5. Residues 201 to 278 (LSEEVPHGIA…YIRLWVKVKE (78 aa)) form the KH type-2 domain.

It belongs to the TRAFAC class TrmE-Era-EngA-EngB-Septin-like GTPase superfamily. Era GTPase family. In terms of assembly, monomer.

The protein localises to the cytoplasm. It is found in the cell membrane. Functionally, an essential GTPase that binds both GDP and GTP, with rapid nucleotide exchange. Plays a role in 16S rRNA processing and 30S ribosomal subunit biogenesis and possibly also in cell cycle regulation and energy metabolism. This Clostridium botulinum (strain Langeland / NCTC 10281 / Type F) protein is GTPase Era.